We begin with the raw amino-acid sequence, 405 residues long: Scramblase ANY1 (405 aa).

Over 1-51 (MSTTGPLDATLIRDVAVATATKASYDMSDTLYSYLPKVDQFYIPEWLTMQF) the chain is Cytoplasmic. The chain crosses the membrane as a helical span at residues 52 to 72 (IANNLISFTPLFSYGTTIISI). Residues 73–76 (EKCK) are Lumenal-facing. The chain crosses the membrane as a helical span at residues 77-97 (TALGFSIDICATMLIASILRI). Residues 98–103 (SYYLIT) lie on the Cytoplasmic side of the membrane. The chain crosses the membrane as a helical span at residues 104–124 (PYEITLLRQSLVMIFIQLILL). Topologically, residues 125-177 (RTSLKYRPDEYKYQNLTDVESLSHLIHDIWFEFFSCINRPKFLSEDWKNLIKS) are lumenal. Residues 178 to 198 (LSFTNLLKFSFKIFLAFFYKI) traverse the membrane as a helical segment. Residues 199-223 (LKFFDPNFKRIGAFWQWDDDKNFWR) are Cytoplasmic-facing. The chain crosses the membrane as a helical span at residues 224–244 (FLALFATVQILVTFFISNILN). At 245-254 (WDSLAQGLGS) the chain is on the lumenal side. One can recognise a PQ-loop domain in the interval 252–309 (LGSIIGSLGLLVESLLPLPQIAILYKLKSVQGFKLILLVSWLCGDTLKITYLIFGAKN). A helical transmembrane segment spans residues 255–275 (IIGSLGLLVESLLPLPQIAIL). The Cytoplasmic segment spans residues 276 to 283 (YKLKSVQG). Residues 284-306 (FKLILLVSWLCGDTLKITYLIFG) form a helical membrane-spanning segment. Residues 307 to 312 (AKNISA) are Lumenal-facing. The chain crosses the membrane as a helical span at residues 313–335 (LFVIFALFQMSLDFYIGGQYIYY). At 336 to 405 (RYYYPKLRHQ…GKSQAQAVTL (70 aa)) the chain is on the cytoplasmic side. Positions 379–405 (LKQDSNDTSDSPQDDQVGKSQAQAVTL) are disordered. Positions 396 to 405 (GKSQAQAVTL) are enriched in polar residues.

In terms of assembly, interacts with NEO1.

It localises to the golgi apparatus membrane. The protein resides in the late endosome membrane. Functionally, phospholipid scramblase that transports phosphatidylserine (PS) and phosphatidylethalonamine (PE) bidirectionally from one leaflet to the other of the phospholipid bilayer to at least partially collapse the membrane asymmetry established by NEO1 and other flippases. The PS scramblase activity has been disputed. Functions in the trafficking pathway from endosomes to the trans-Golgi network (TGN). The protein is Scramblase ANY1 of Saccharomyces cerevisiae (strain ATCC 204508 / S288c) (Baker's yeast).